The following is a 234-amino-acid chain: UPF0173 metal-dependent hydrolase Atu1317 (234 aa).

This sequence belongs to the UPF0173 family.

This Agrobacterium fabrum (strain C58 / ATCC 33970) (Agrobacterium tumefaciens (strain C58)) protein is UPF0173 metal-dependent hydrolase Atu1317.